The following is a 176-amino-acid chain: Large ribosomal subunit protein uL6 (176 aa).

Basic and acidic residues predominate over residues 151 to 169; that stretch reads RPPEPYKGRGIKYTDEHIQ. A disordered region spans residues 151–176; sequence RPPEPYKGRGIKYTDEHIQRKAGKTK.

This sequence belongs to the universal ribosomal protein uL6 family. As to quaternary structure, part of the 50S ribosomal subunit.

Functionally, this protein binds to the 23S rRNA, and is important in its secondary structure. It is located near the subunit interface in the base of the L7/L12 stalk, and near the tRNA binding site of the peptidyltransferase center. This Desulfosudis oleivorans (strain DSM 6200 / JCM 39069 / Hxd3) (Desulfococcus oleovorans) protein is Large ribosomal subunit protein uL6.